The primary structure comprises 143 residues: Flagellar assembly factor FliW (143 aa).

It belongs to the FliW family. In terms of assembly, interacts with translational regulator CsrA and flagellin(s).

The protein resides in the cytoplasm. Acts as an anti-CsrA protein, binds CsrA and prevents it from repressing translation of its target genes, one of which is flagellin. Binds to flagellin and participates in the assembly of the flagellum. This Bacillus velezensis (strain DSM 23117 / BGSC 10A6 / LMG 26770 / FZB42) (Bacillus amyloliquefaciens subsp. plantarum) protein is Flagellar assembly factor FliW.